Consider the following 88-residue polypeptide: UPF0298 protein Bcer98_2635 (88 aa).

The protein belongs to the UPF0298 family.

It localises to the cytoplasm. This Bacillus cytotoxicus (strain DSM 22905 / CIP 110041 / 391-98 / NVH 391-98) protein is UPF0298 protein Bcer98_2635.